A 356-amino-acid polypeptide reads, in one-letter code: Altered inheritance of mitochondria protein 23, mitochondrial (356 aa).

The transit peptide at 1–32 directs the protein to the mitochondrion; it reads MLKVPLSDVLSQKMLFLKSFRYFHCTKYFSRD.

This sequence belongs to the AIM23 family.

It is found in the mitochondrion. This Saccharomyces cerevisiae (strain ATCC 204508 / S288c) (Baker's yeast) protein is Altered inheritance of mitochondria protein 23, mitochondrial (AIM23).